The primary structure comprises 1354 residues: Ubiquitin carboxyl-terminal hydrolase 47 (1354 aa).

The segment covering 114-133 (EQPQLASDESGTADSSGLDD) has biased composition (polar residues). Positions 114-139 (EQPQLASDESGTADSSGLDDSTQEKF) are disordered. A USP domain is found at 174–549 (VGLVNQAMTC…NAYMLMYRLK (376 aa)). The active-site Nucleophile is C183. A disordered region spans residues 408–438 (DVEDEKSPQTDSCTDSGAENEGSCHSDQMSN). Residues 416–438 (QTDSCTDSGAENEGSCHSDQMSN) are compositionally biased toward polar residues. The Proton acceptor role is filled by H488. The segment covering 863–882 (LSLQQHQDGGNGDSSKSTEG) has biased composition (polar residues). 2 disordered regions span residues 863–1004 (LSLQ…ESGK) and 1314–1335 (LAKK…SPRK). Residues 920-930 (PEERSDSDVNN) are compositionally biased toward basic and acidic residues. Over residues 933–949 (STSSVDSDILSSSHSSD) the composition is skewed to low complexity. Positions 977–986 (KANDGKKETW) are enriched in basic and acidic residues. The span at 987–1000 (DTAEEDSGTDSEYD) shows a compositional bias: acidic residues.

The protein belongs to the peptidase C19 family. USP47 subfamily.

Its subcellular location is the cytoplasm. The catalysed reaction is Thiol-dependent hydrolysis of ester, thioester, amide, peptide and isopeptide bonds formed by the C-terminal Gly of ubiquitin (a 76-residue protein attached to proteins as an intracellular targeting signal).. In terms of biological role, ubiquitin-specific protease that specifically deubiquitinates monoubiquitinated DNA polymerase beta (polb), stabilizing polb thereby playing a role in base-excision repair (BER). In Xenopus tropicalis (Western clawed frog), this protein is Ubiquitin carboxyl-terminal hydrolase 47 (usp47).